The following is a 542-amino-acid chain: Chaperonin GroEL 5 (542 aa).

Residues 30-33 (TLGP), Lys-51, 87-91 (DGTTT), Gly-415, and Asp-496 each bind ATP.

It belongs to the chaperonin (HSP60) family. As to quaternary structure, forms a cylinder of 14 subunits composed of two heptameric rings stacked back-to-back. Interacts with the co-chaperonin GroES.

The protein resides in the cytoplasm. It catalyses the reaction ATP + H2O + a folded polypeptide = ADP + phosphate + an unfolded polypeptide.. In terms of biological role, together with its co-chaperonin GroES, plays an essential role in assisting protein folding. The GroEL-GroES system forms a nano-cage that allows encapsulation of the non-native substrate proteins and provides a physical environment optimized to promote and accelerate protein folding. The polypeptide is Chaperonin GroEL 5 (Rhizobium meliloti (strain 1021) (Ensifer meliloti)).